We begin with the raw amino-acid sequence, 261 residues long: Ribonuclease PH (261 aa).

Phosphate-binding positions include arginine 87 and 125 to 127 (GTR).

Belongs to the RNase PH family. As to quaternary structure, homohexameric ring arranged as a trimer of dimers.

It catalyses the reaction tRNA(n+1) + phosphate = tRNA(n) + a ribonucleoside 5'-diphosphate. In terms of biological role, phosphorolytic 3'-5' exoribonuclease that plays an important role in tRNA 3'-end maturation. Removes nucleotide residues following the 3'-CCA terminus of tRNAs; can also add nucleotides to the ends of RNA molecules by using nucleoside diphosphates as substrates, but this may not be physiologically important. Probably plays a role in initiation of 16S rRNA degradation (leading to ribosome degradation) during starvation. This chain is Ribonuclease PH, found in Desulforudis audaxviator (strain MP104C).